A 142-amino-acid chain; its full sequence is Large ribosomal subunit protein uL11 (142 aa).

It belongs to the universal ribosomal protein uL11 family. Part of the ribosomal stalk of the 50S ribosomal subunit. Interacts with L10 and the large rRNA to form the base of the stalk. L10 forms an elongated spine to which L12 dimers bind in a sequential fashion forming a multimeric L10(L12)X complex. In terms of processing, one or more lysine residues are methylated.

Functionally, forms part of the ribosomal stalk which helps the ribosome interact with GTP-bound translation factors. This chain is Large ribosomal subunit protein uL11, found in Leptospira interrogans serogroup Icterohaemorrhagiae serovar copenhageni (strain Fiocruz L1-130).